The chain runs to 507 residues: Probable allantoinase (507 aa).

Zn(2+) is bound by residues H105, H107, K195, H231, H294, and D368. An N6-carboxylysine modification is found at K195.

This sequence belongs to the metallo-dependent hydrolases superfamily. Allantoinase family. Homotetramer. It depends on Zn(2+) as a cofactor. In terms of processing, carboxylation allows a single lysine to coordinate two zinc ions.

It catalyses the reaction (S)-allantoin + H2O = allantoate + H(+). The protein operates within nitrogen metabolism; (S)-allantoin degradation; allantoate from (S)-allantoin: step 1/1. Catalyzes the conversion of allantoin (5-ureidohydantoin) to allantoate by hydrolytic cleavage of the five-member hydantoin ring. Catalyzes the first step of the ureide allantoin degradation followed by the sequential activity of AAH, UGLYAH and UAH which allows a complete purine breakdown without the intermediate generation of urea. The polypeptide is Probable allantoinase (ALN) (Oryza sativa subsp. japonica (Rice)).